The following is a 233-amino-acid chain: Adenylyl cyclase-associated protein 1 (233 aa).

Residue Y14 is modified to Phosphotyrosine. At S17 the chain carries Phosphoserine. Disordered regions lie at residues 43–71 and 91–129; these read VDKX…PSAL and DEKT…KPVT. Over residues 53-64 the composition is skewed to low complexity; sequence LSGLPSGPSAGS. N6-methyllysine is present on K101. 4 positions are modified to phosphoserine: S104, S115, S122, and S124. K151 participates in a covalent cross-link: Glycyl lysine isopeptide (Lys-Gly) (interchain with G-Cter in SUMO1). The C-CAP/cofactor C-like domain maps to 173–221; the sequence is VPXISINKXDGRHIYLSKNSLDCEIVSAKSSEMNVLIPTEGGDFNEFPV.

This sequence belongs to the CAP family. In terms of assembly, homodimer. Binds actin monomers.

The protein resides in the cell membrane. In terms of biological role, directly regulates filament dynamics and has been implicated in a number of complex developmental and morphological processes, including mRNA localization and the establishment of cell polarity. This Sus scrofa (Pig) protein is Adenylyl cyclase-associated protein 1 (CAP1).